Reading from the N-terminus, the 287-residue chain is MAATSTAAAASSIMGTRVVSDISSNSSRFTARFGFGTKKASPKKAKTVISDRPLWFPGAKSPEYLDGSLVGDYGFDPFGLGKPAEYLQFDLDSLDQNLAKNLYGEVIGTRTEAVDPKSTPFQPYSEVFGLQRFRECELIHGRWAMLATLGAITVEWLTGVTWQDAGKVELVDGSSYLGQPLPFSISTLIWIEVLVIGYIEFQRNAELDSEKRLYPGGKFFDPLGLASDPVKKAQLQLAEIKHARLAMVGFLGFAVQAAATGKGPLNNWATHLSDPLHTTIIDTFSSS.

The N-terminal 31 residues, 1–31 (MAATSTAAAASSIMGTRVVSDISSNSSRFTA), are a transit peptide targeting the chloroplast. The residue at position 32 (R32) is an N2-acetylarginine. T37 carries the phosphothreonine modification. Residue W55 coordinates chlorophyll b. F75 is a chlorophyll a binding site. 2 positions are modified to phosphothreonine: T109 and T111. Chlorophyll a contacts are provided by E137 and H140. A helical transmembrane segment spans residues 143–163 (WAMLATLGAITVEWLTGVTWQ). Residue L177 participates in chlorophyll a binding. The chain crosses the membrane as a helical span at residues 181–201 (LPFSISTLIWIEVLVIGYIEF). Residues E200 and R203 each contribute to the chlorophyll b site. Chlorophyll a is bound by residues E239, H242, R244, Q256, and H271. Residues 245 to 265 (LAMVGFLGFAVQAAATGKGPL) form a helical membrane-spanning segment.

This sequence belongs to the light-harvesting chlorophyll a/b-binding (LHC) protein family. In terms of assembly, the LHC complex consists of chlorophyll a-b binding proteins. Binds at least 14 chlorophylls (8 Chl-a and 6 Chl-b) and carotenoids such as lutein and neoxanthin. serves as cofactor. Photoregulated by reversible phosphorylation of its threonine residues.

The protein resides in the plastid. The protein localises to the chloroplast thylakoid membrane. The light-harvesting complex (LHC) functions as a light receptor, it captures and delivers excitation energy to photosystems with which it is closely associated. This is Chlorophyll a-b binding protein CP29.2, chloroplastic (LHCB4.2) from Arabidopsis thaliana (Mouse-ear cress).